The sequence spans 418 residues: Serine--tRNA ligase (418 aa).

231–233 (TAE) is an L-serine binding site. Residue 262–264 (RSE) coordinates ATP. E285 contributes to the L-serine binding site. Residue 349–352 (EISS) coordinates ATP. L-serine is bound at residue S385.

This sequence belongs to the class-II aminoacyl-tRNA synthetase family. Type-1 seryl-tRNA synthetase subfamily. Homodimer. The tRNA molecule binds across the dimer.

Its subcellular location is the cytoplasm. The catalysed reaction is tRNA(Ser) + L-serine + ATP = L-seryl-tRNA(Ser) + AMP + diphosphate + H(+). It catalyses the reaction tRNA(Sec) + L-serine + ATP = L-seryl-tRNA(Sec) + AMP + diphosphate + H(+). It functions in the pathway aminoacyl-tRNA biosynthesis; selenocysteinyl-tRNA(Sec) biosynthesis; L-seryl-tRNA(Sec) from L-serine and tRNA(Sec): step 1/1. Catalyzes the attachment of serine to tRNA(Ser). Is also able to aminoacylate tRNA(Sec) with serine, to form the misacylated tRNA L-seryl-tRNA(Sec), which will be further converted into selenocysteinyl-tRNA(Sec). The sequence is that of Serine--tRNA ligase from Ureaplasma parvum serovar 3 (strain ATCC 27815 / 27 / NCTC 11736).